An 861-amino-acid polypeptide reads, in one-letter code: uncharacterized protein (861 aa).

12 helical membrane passes run 4 to 24 (KHIMIYAASLLVSVLAHAFFV), 75 to 95 (LGYYFSASFLFLAVSAAVWLL), 106 to 126 (TLFWAESAVFISIFKLSLIIF), 159 to 179 (EAYWEFFTDTMVWLPLLVLGA), 199 to 219 (LINNFYFAYINLIFIGIYVLF), 238 to 258 (LFLVSGFISFGISAAAFVPVV), 282 to 302 (ILFSSRIIIVPAAFLLFLFII), 313 to 333 (FAGLSLLFILFHFSPYAASVF), 343 to 363 (FEYVLAFTIAGAAAAGLSQLS), 370 to 385 (LLPAAAVVLLLYLYHI), 396 to 416 (ANESILLLLLMTIAALFAAAF), and 425 to 445 (VYGIIILSSLFVANSYQKYAL). A coiled-coil region spans residues 738 to 766 (ELRNIALYEENYQTLKNAVMQNKTEKADK). The helical transmembrane segment at 833–853 (PYFKISAIISLVSLLLAVFYI) threads the bilayer.

Its subcellular location is the cell membrane. This is an uncharacterized protein from Bacillus subtilis (strain 168).